The chain runs to 281 residues: Cardosin-F (281 aa).

The 261-residue stretch at 18 to 278 (YYGEIGIGTP…DYGNLLVGFA (261 aa)) folds into the Peptidase A1 domain. D36 is an active-site residue. The cysteines at positions 181 and 185 are disulfide-linked. Residue D190 is part of the active site. The N-linked (GlcNAc...) asparagine glycan is linked to N213.

This sequence belongs to the peptidase A1 family. Heterodimer of a light chain and a heavy chain. An intermediate form is produced first, and undergoes proteolytic processing to remove the internal plant-specific insert (PSI) and the propeptide. Post-translationally, N-glycosylated. As to expression, pistils.

The protein resides in the microsome membrane. The protein localises to the protein storage vacuole. It is found in the secreted. It localises to the cell wall. Its subcellular location is the extracellular space. The protein resides in the extracellular matrix. Its activity is regulated as follows. Inhibited by pepstatin. In terms of biological role, aspartic protease with a high preference for bonds between hydrophobic residues. The polypeptide is Cardosin-F (Cynara cardunculus (Cardoon)).